Consider the following 350-residue polypeptide: Opsin, longwave 563 nm (350 aa).

At histidine 1–valine 45 the chain is on the extracellular side. N-linked (GlcNAc...) asparagine glycosylation occurs at asparagine 27. The helical transmembrane segment at tyrosine 46–alanine 70 threads the bilayer. At threonine 71 to asparagine 82 the chain is on the cytoplasmic side. Residues tryptophan 83–valine 108 traverse the membrane as a helical segment. Residues histidine 109–glutamate 122 are Extracellular-facing. Cysteine 119 and cysteine 196 are joined by a disulfide. A helical transmembrane segment spans residues glycine 123–tryptophan 142. The Cytoplasmic segment spans residues glutamate 143–leucine 161. A helical transmembrane segment spans residues alanine 162–serine 185. Over arginine 186–serine 211 the chain is Extracellular. A helical transmembrane segment spans residues tyrosine 212–isoleucine 239. At arginine 240–arginine 261 the chain is on the cytoplasmic side. A helical transmembrane segment spans residues methionine 262–alanine 285. Over alanine 286 to histidine 293 the chain is Extracellular. Residues proline 294–methionine 318 form a helical membrane-spanning segment. Position 305 is an N6-(retinylidene)lysine (lysine 305). The Cytoplasmic segment spans residues asparagine 319–serine 350.

It belongs to the G-protein coupled receptor 1 family. Opsin subfamily. In terms of processing, phosphorylated on some or all of the serine and threonine residues present in the C-terminal region. The color pigments are found in the cone photoreceptor cells.

It localises to the membrane. Visual pigments are the light-absorbing molecules that mediate vision. They consist of an apoprotein, opsin, covalently linked to cis-retinal. In Callithrix jacchus (White-tufted-ear marmoset), this protein is Opsin, longwave 563 nm.